The chain runs to 343 residues: Biotin synthase (343 aa).

Residues 36–254 (RQVQVSTLLS…IAVARIMMPR (219 aa)) form the Radical SAM core domain. [4Fe-4S] cluster contacts are provided by Cys-51, Cys-55, and Cys-58. Residues Cys-95, Cys-126, Cys-186, and Arg-258 each contribute to the [2Fe-2S] cluster site.

The protein belongs to the radical SAM superfamily. Biotin synthase family. As to quaternary structure, homodimer. [4Fe-4S] cluster is required as a cofactor. [2Fe-2S] cluster serves as cofactor.

It carries out the reaction (4R,5S)-dethiobiotin + (sulfur carrier)-SH + 2 reduced [2Fe-2S]-[ferredoxin] + 2 S-adenosyl-L-methionine = (sulfur carrier)-H + biotin + 2 5'-deoxyadenosine + 2 L-methionine + 2 oxidized [2Fe-2S]-[ferredoxin]. It participates in cofactor biosynthesis; biotin biosynthesis; biotin from 7,8-diaminononanoate: step 2/2. Its function is as follows. Catalyzes the conversion of dethiobiotin (DTB) to biotin by the insertion of a sulfur atom into dethiobiotin via a radical-based mechanism. This is Biotin synthase from Erwinia tasmaniensis (strain DSM 17950 / CFBP 7177 / CIP 109463 / NCPPB 4357 / Et1/99).